The primary structure comprises 225 residues: Methylthioribulose-1-phosphate dehydratase (225 aa).

Zn(2+) is bound by residues histidine 106 and histidine 108.

The protein belongs to the aldolase class II family. MtnB subfamily. Zn(2+) serves as cofactor.

The enzyme catalyses 5-(methylsulfanyl)-D-ribulose 1-phosphate = 5-methylsulfanyl-2,3-dioxopentyl phosphate + H2O. Its pathway is amino-acid biosynthesis; L-methionine biosynthesis via salvage pathway; L-methionine from S-methyl-5-thio-alpha-D-ribose 1-phosphate: step 2/6. Its function is as follows. Catalyzes the dehydration of methylthioribulose-1-phosphate (MTRu-1-P) into 2,3-diketo-5-methylthiopentyl-1-phosphate (DK-MTP-1-P). The chain is Methylthioribulose-1-phosphate dehydratase from Xanthomonas oryzae pv. oryzae (strain MAFF 311018).